Here is a 371-residue protein sequence, read N- to C-terminus: Epoxyqueuosine reductase (371 aa).

Residue D137 is the Proton donor of the active site. Positions 179–211 constitute a 4Fe-4S ferredoxin-type domain; the sequence is IPLPVDTPVENQCGKCTACISSCPTNAILENGV. 8 residues coordinate [4Fe-4S] cluster: C191, C194, C197, C201, C217, C244, C247, and C251.

This sequence belongs to the QueG family. In terms of assembly, monomer. The cofactor is cob(II)alamin. [4Fe-4S] cluster is required as a cofactor.

It localises to the cytoplasm. The enzyme catalyses epoxyqueuosine(34) in tRNA + AH2 = queuosine(34) in tRNA + A + H2O. It functions in the pathway tRNA modification; tRNA-queuosine biosynthesis. Functionally, catalyzes the conversion of epoxyqueuosine (oQ) to queuosine (Q), which is a hypermodified base found in the wobble positions of tRNA(Asp), tRNA(Asn), tRNA(His) and tRNA(Tyr). The chain is Epoxyqueuosine reductase from Aliivibrio fischeri (strain ATCC 700601 / ES114) (Vibrio fischeri).